A 166-amino-acid polypeptide reads, in one-letter code: Interferon gamma (166 aa).

A signal peptide spans 1 to 23; that stretch reads MKYTSSFLALLLSVLLGFSGSYG. Residue Gln24 is modified to Pyrrolidone carboxylic acid. N-linked (GlcNAc...) asparagine glycans are attached at residues Asn39 and Asn106.

The protein belongs to the type II (or gamma) interferon family. Homodimer. Interacts with IFNGR1 (via extracellular domain); this interaction promotes IFNGR1 dimerization. In terms of tissue distribution, released primarily from activated T lymphocytes.

It is found in the secreted. In terms of biological role, type II interferon produced by immune cells such as T-cells and NK cells that plays crucial roles in antimicrobial, antiviral, and antitumor responses by activating effector immune cells and enhancing antigen presentation. Primarily signals through the JAK-STAT pathway after interaction with its receptor IFNGR1 to affect gene regulation. Upon IFNG binding, IFNGR1 intracellular domain opens out to allow association of downstream signaling components JAK2, JAK1 and STAT1, leading to STAT1 activation, nuclear translocation and transcription of IFNG-regulated genes. Many of the induced genes are transcription factors such as IRF1 that are able to further drive regulation of a next wave of transcription. Plays a role in class I antigen presentation pathway by inducing a replacement of catalytic proteasome subunits with immunoproteasome subunits. In turn, increases the quantity, quality, and repertoire of peptides for class I MHC loading. Increases the efficiency of peptide generation also by inducing the expression of activator PA28 that associates with the proteasome and alters its proteolytic cleavage preference. Up-regulates as well MHC II complexes on the cell surface by promoting expression of several key molecules such as cathepsins B/CTSB, H/CTSH, and L/CTSL. Participates in the regulation of hematopoietic stem cells during development and under homeostatic conditions by affecting their development, quiescence, and differentiation. This Capra hircus (Goat) protein is Interferon gamma (IFNG).